The chain runs to 275 residues: Phosphonoacetaldehyde hydrolase (275 aa).

Asp-15 functions as the Nucleophile in the catalytic mechanism. Mg(2+)-binding residues include Asp-15 and Ala-17. The active-site Schiff-base intermediate with substrate is the Lys-56. A Mg(2+)-binding site is contributed by Asp-189.

It belongs to the HAD-like hydrolase superfamily. PhnX family. As to quaternary structure, homodimer. The cofactor is Mg(2+).

The enzyme catalyses phosphonoacetaldehyde + H2O = acetaldehyde + phosphate + H(+). In terms of biological role, involved in phosphonate degradation. The protein is Phosphonoacetaldehyde hydrolase of Pseudomonas aeruginosa (strain UCBPP-PA14).